The sequence spans 696 residues: Ribonucleoside-diphosphate reductase subunit beta (696 aa).

Residues Asp97, Glu127, and His130 each coordinate Fe cation. The active site involves Tyr134. Positions 194 and 228 each coordinate Fe cation. In terms of domain architecture, DOD-type homing endonuclease spans 377 to 507 (DGTIDSKRNG…FVQALCALGG (131 aa)). Residue His577 participates in Fe cation binding.

The protein belongs to the ribonucleoside diphosphate reductase small chain family. Tetramer of two alpha and two beta subunits. It depends on Fe cation as a cofactor. Post-translationally, this protein undergoes a protein self splicing that involves a post-translational excision of the intervening region (intein) followed by peptide ligation.

The enzyme catalyses a 2'-deoxyribonucleoside 5'-diphosphate + [thioredoxin]-disulfide + H2O = a ribonucleoside 5'-diphosphate + [thioredoxin]-dithiol. Functionally, provides the precursors necessary for DNA synthesis. Catalyzes the biosynthesis of deoxyribonucleotides from the corresponding ribonucleotides. The sequence is that of Ribonucleoside-diphosphate reductase subunit beta (nrdB) from Aquifex aeolicus (strain VF5).